Consider the following 319-residue polypeptide: Ribonuclease Z (319 aa).

The Zn(2+) site is built by His62, His64, Asp66, His67, His145, Asp215, and His273. Catalysis depends on Asp66, which acts as the Proton acceptor.

Belongs to the RNase Z family. As to quaternary structure, homodimer. The cofactor is Zn(2+).

It catalyses the reaction Endonucleolytic cleavage of RNA, removing extra 3' nucleotides from tRNA precursor, generating 3' termini of tRNAs. A 3'-hydroxy group is left at the tRNA terminus and a 5'-phosphoryl group is left at the trailer molecule.. Functionally, zinc phosphodiesterase, which displays some tRNA 3'-processing endonuclease activity. Probably involved in tRNA maturation, by removing a 3'-trailer from precursor tRNA. This chain is Ribonuclease Z, found in Borrelia duttonii (strain Ly).